A 445-amino-acid chain; its full sequence is DDB1- and CUL4-associated factor 13 (445 aa).

Residue Lys49 is modified to N6-acetyllysine. WD repeat units lie at residues 64 to 104 (GHRD…CIRT), 107 to 146 (AHEG…YGDE), 149 to 191 (PLHT…PICS), 194 to 234 (WGFD…PLKK), 236 to 276 (ILDM…TPVM), 280 to 319 (DHVS…SREV), and 323 to 362 (KRMQ…KLGV). The required for nucleolar location stretch occupies residues 353–441 (KANASEKLGV…LVSEKKKHVV (89 aa)).

It belongs to the WD repeat DCAF13/WDSOF1 family. In terms of assembly, part of the small subunit (SSU) processome, composed of more than 70 proteins and the RNA chaperone small nucleolar RNA (snoRNA) U3. Component of the DCX(DCAF13) E3 ubiquitin ligase complex, at least composed of CUL4 (CUL4A or CUL4B), DDB1, DCAF13 and RBX1. Interacts (via WD40 domain) with DDB1. Interacts with ESR1 and LATS1. In terms of tissue distribution, expressed in the endometrium during decidualization. Expression is down-regulated in preeclampsia decidual tissues.

It is found in the nucleus. Its subcellular location is the nucleolus. Its pathway is protein modification; protein ubiquitination. Part of the small subunit (SSU) processome, first precursor of the small eukaryotic ribosomal subunit. During the assembly of the SSU processome in the nucleolus, many ribosome biogenesis factors, an RNA chaperone and ribosomal proteins associate with the nascent pre-rRNA and work in concert to generate RNA folding, modifications, rearrangements and cleavage as well as targeted degradation of pre-ribosomal RNA by the RNA exosome. Participates in the 18S rRNA processing in growing oocytes, being essential for oocyte nonsurrounded nucleolus (NSN) to surrounded nucleolus (SN) transition. In terms of biological role, substrate-recognition component of a DCX (DDB1-CUL4-X-box) E3 ubiquitin-protein ligase complex that plays a key role in embryo preimplantation and is required for normal meiotic cycle progression in oocytes. Acts as a maternal factor that regulates oocyte and zygotic chromatin tightness during maternal to zygotic transition. Also involved in the transformation of the endometrium into the decidua, known as decidualization, providing a solid foundation for implantation of blastocysts. Recognizes the histone methyltransferases SUV39H1 and SUV39H2 and directs them to polyubiquitination and proteasomal degradation, which facilitates the H3K9me3 removal and early zygotic gene expression, essential steps for progressive genome reprogramming and the establishment of pluripotency during preimplantation embryonic development. Supports the spindle assembly and chromosome condensation during oocyte meiotic division by targeting the polyubiquitination and degradation of PTEN, a lipid phosphatase that inhibits PI3K pathway as well as oocyte growth and maturation. Targets PMP22 for polyubiquitination and proteasomal degradation. The protein is DDB1- and CUL4-associated factor 13 of Homo sapiens (Human).